Reading from the N-terminus, the 38-residue chain is Natriuretic peptide DNP (38 aa).

A disulfide bridge connects residues Cys7 and Cys23. The interval 19–38 (SNLGCPSLRDPRPNAPSTSA) is disordered.

The protein belongs to the natriuretic peptide family. Expressed by the venom gland.

It is found in the secreted. In terms of biological role, exhibits vasodilator, natriuretic and diuretic properties in animal models and human tissues. Acts by stimulating cGMP via the natriuretic peptide receptor 1 (NPR1). Is a poor agonist of the atrial natriuretic peptide receptor 2 (NPR2). Is not degraded by neutral endopeptidase (NEP/MME). Binds to atrial natriuretic peptide clearance receptor (NPR-C/NPR3), which may be responsible of the removal of DNP from the circulation. Increases calcium uptake and induces histamine release from rat peritoneal mast cells. Increases calcium-activated potassium (KCa) current in gastric antral circular smooth muscle cells by increasing cGMP production and activating inositol trisphosphate receptors (IP3Rs). In vivo, reduces both systolic and diastolic blood pressure with no effect on heart rate, when intravenously injected in conscious rabbits. This chain is Natriuretic peptide DNP, found in Dendroaspis angusticeps (Eastern green mamba).